The sequence spans 304 residues: Protein YIF1B (304 aa).

Topologically, residues methionine 1–aspartate 146 are cytoplasmic. Residues methionine 21–proline 54 are disordered. The span at aspartate 30–valine 42 shows a compositional bias: polar residues. A helical transmembrane segment spans residues leucine 147–threonine 167. Over glutamine 168–serine 182 the chain is Extracellular. A helical transmembrane segment spans residues alanine 183–valine 203. At asparagine 204 to leucine 212 the chain is on the cytoplasmic side. A helical membrane pass occupies residues valine 213–phenylalanine 233. Over glycine 234–threonine 236 the chain is Extracellular. The helical transmembrane segment at glycine 237–leucine 257 threads the bilayer. The Cytoplasmic segment spans residues arginine 258–tyrosine 282. The chain crosses the membrane as a helical span at residues leucine 283–valine 303. Arginine 304 is a topological domain (extracellular).

It belongs to the YIF1 family.

The protein localises to the endoplasmic reticulum membrane. It is found in the golgi apparatus membrane. Its subcellular location is the endoplasmic reticulum-Golgi intermediate compartment membrane. Functionally, functions in endoplasmic reticulum to Golgi vesicle-mediated transport and regulates the proper organization of the endoplasmic reticulum and the Golgi. Plays a key role in targeting to neuronal dendrites receptors such as HTR1A. Plays also a role in primary cilium and sperm flagellum assembly probably through protein transport to these compartments. In Danio rerio (Zebrafish), this protein is Protein YIF1B (yif1b).